The primary structure comprises 663 residues: DNA ligase (663 aa).

NAD(+) is bound by residues 33-37 (DYSYD), 82-83 (SI), and Glu-112. The active-site N6-AMP-lysine intermediate is the Lys-114. NAD(+) contacts are provided by Arg-135, Glu-171, Lys-285, and Lys-309. Residues Cys-403, Cys-406, Cys-419, and Cys-424 each coordinate Zn(2+). The BRCT domain maps to 581 to 663 (DKEAPLQGKV…LRILDAKSVS (83 aa)).

This sequence belongs to the NAD-dependent DNA ligase family. LigA subfamily. It depends on Mg(2+) as a cofactor. The cofactor is Mn(2+).

The catalysed reaction is NAD(+) + (deoxyribonucleotide)n-3'-hydroxyl + 5'-phospho-(deoxyribonucleotide)m = (deoxyribonucleotide)n+m + AMP + beta-nicotinamide D-nucleotide.. Functionally, DNA ligase that catalyzes the formation of phosphodiester linkages between 5'-phosphoryl and 3'-hydroxyl groups in double-stranded DNA using NAD as a coenzyme and as the energy source for the reaction. It is essential for DNA replication and repair of damaged DNA. The sequence is that of DNA ligase from Chlamydia trachomatis serovar A (strain ATCC VR-571B / DSM 19440 / HAR-13).